The primary structure comprises 303 residues: tRNA pseudouridine synthase A (303 aa).

D59 functions as the Nucleophile in the catalytic mechanism. Residue Y128 coordinates substrate.

The protein belongs to the tRNA pseudouridine synthase TruA family. Homodimer.

It carries out the reaction uridine(38/39/40) in tRNA = pseudouridine(38/39/40) in tRNA. In terms of biological role, formation of pseudouridine at positions 38, 39 and 40 in the anticodon stem and loop of transfer RNAs. This chain is tRNA pseudouridine synthase A, found in Bifidobacterium longum (strain DJO10A).